We begin with the raw amino-acid sequence, 106 residues long: Cyclin-dependent protein kinase inhibitor SMR15 (106 aa).

Functionally, probable cyclin-dependent protein kinase (CDK) inhibitor that functions as a repressor of mitosis in the endoreduplication cell cycle. This Arabidopsis thaliana (Mouse-ear cress) protein is Cyclin-dependent protein kinase inhibitor SMR15.